The primary structure comprises 250 residues: Hydroxyacylglutathione hydrolase (250 aa).

Residues H53, H55, D57, H58, H110, D127, and H165 each coordinate Zn(2+).

This sequence belongs to the metallo-beta-lactamase superfamily. Glyoxalase II family. In terms of assembly, monomer. Zn(2+) serves as cofactor.

It catalyses the reaction an S-(2-hydroxyacyl)glutathione + H2O = a 2-hydroxy carboxylate + glutathione + H(+). Its pathway is secondary metabolite metabolism; methylglyoxal degradation; (R)-lactate from methylglyoxal: step 2/2. Its function is as follows. Thiolesterase that catalyzes the hydrolysis of S-D-lactoyl-glutathione to form glutathione and D-lactic acid. This chain is Hydroxyacylglutathione hydrolase, found in Buchnera aphidicola subsp. Schizaphis graminum (strain Sg).